We begin with the raw amino-acid sequence, 481 residues long: Glutamyl-tRNA(Gln) amidotransferase subunit A (481 aa).

Residues Lys78 and Ser153 each act as charge relay system in the active site. The Acyl-ester intermediate role is filled by Ser177.

It belongs to the amidase family. GatA subfamily. Heterotrimer of A, B and C subunits.

It catalyses the reaction L-glutamyl-tRNA(Gln) + L-glutamine + ATP + H2O = L-glutaminyl-tRNA(Gln) + L-glutamate + ADP + phosphate + H(+). In terms of biological role, allows the formation of correctly charged Gln-tRNA(Gln) through the transamidation of misacylated Glu-tRNA(Gln) in organisms which lack glutaminyl-tRNA synthetase. The reaction takes place in the presence of glutamine and ATP through an activated gamma-phospho-Glu-tRNA(Gln). This Borrelia garinii subsp. bavariensis (strain ATCC BAA-2496 / DSM 23469 / PBi) (Borreliella bavariensis) protein is Glutamyl-tRNA(Gln) amidotransferase subunit A.